Reading from the N-terminus, the 166-residue chain is Large ribosomal subunit protein mL41 (166 aa).

A mitochondrion-targeting transit peptide spans 1-26 (MQNCIKLVPLALKCPQRAISTSAVLD).

The protein belongs to the mitochondrion-specific ribosomal protein mL41 family. In terms of assembly, component of the mitochondrial ribosome large subunit (39S) which comprises a 16S rRNA and about 50 distinct proteins.

It is found in the mitochondrion. The chain is Large ribosomal subunit protein mL41 (mRpL41) from Drosophila pseudoobscura pseudoobscura (Fruit fly).